Consider the following 507-residue polypeptide: Sensor protein CseC (507 aa).

The tract at residues 1–42 is disordered; sequence MRGFFRQRRSVSPPGHPYDRTGPGEHAGPGARTGPGGRPRVL. Over residues 25–37 the composition is skewed to gly residues; that stretch reads EHAGPGARTGPGG. The next 2 membrane-spanning stretches (helical) occupy residues 60–80 and 183–203; these read LSAA…LVVH and ALVI…VLIG. Positions 204–260 constitute an HAMP domain; it reads GQLSRRLREAAAAANRVASGEPDVRVRDAIGGVVRDETDDVARAVDAMADALQQRIE. Positions 268–470 constitute a Histidine kinase domain; that stretch reads DIAHELRTPV…VAVLWLPEHA (203 aa). His-271 bears the Phosphohistidine; by autocatalysis mark. The disordered stretch occupies residues 472–507; the sequence is TNTGSYPMLPDRSKSGASSSARDMSREASQGMSRKP. Residues 486–507 show a composition bias toward polar residues; it reads SGASSSARDMSREASQGMSRKP.

It is found in the cell membrane. The catalysed reaction is ATP + protein L-histidine = ADP + protein N-phospho-L-histidine.. Its function is as follows. Member of the two-component regulatory system CseB/CseC involved in the stability of the cell envelope, through activation of transcription of RNA polymerase sigma-E factor. CseC functions as a membrane-associated protein kinase that phosphorylates CseB in response to changes in the cell envelope. This Streptomyces coelicolor (strain ATCC BAA-471 / A3(2) / M145) protein is Sensor protein CseC (cseC).